The following is a 184-amino-acid chain: MREYKLVVLGSGGVGKSALTVQFVQGIFVEKYDPTIEDSYRKQVEVDGQQCMLEILDTAGTEQFTAMRDLYMKNGQGFALVYSITAQSTFNDLQDLREQILRVKDTDDVPMILVGNKCDLEDERVVGKEQGQNLARQWNNCAFLESSAKSKINVNEIFYDLVRQINRKTPVPGKARKKSTCHLL.

10–17 (GSGGVGKS) contributes to the GTP binding site. The Effector region signature appears at 32–40 (YDPTIEDSY). Residues 57 to 61 (DTAGT) and 116 to 119 (NKCD) each bind GTP. At Cys-181 the chain carries Cysteine methyl ester. Cys-181 carries the S-geranylgeranyl cysteine lipid modification. A propeptide spans 182 to 184 (HLL) (removed in mature form).

It belongs to the small GTPase superfamily. Ras family.

The protein resides in the cell membrane. Its subcellular location is the cytoplasm. It is found in the cytosol. The protein localises to the cell junction. The enzyme catalyses GTP + H2O = GDP + phosphate + H(+). Its function is as follows. Probable GTP-binding protein that possesses GTPase activity. May play a role in endothelial cell polarity and endothelial barrier function. This Xenopus laevis (African clawed frog) protein is Ras-related protein Rap-1b (rap1b).